The sequence spans 450 residues: Interferon-induced protein 75 (450 aa).

Residues 1–108 (MFTLTKALEK…IFRSFRNVGY (108 aa)) enclose the HSR domain. 2 disordered regions span residues 131 to 156 (CSLQTLLPPPRPQLSLPSHLSSAPRV) and 170 to 225 (LDEQ…VKDD). Residues 143 to 154 (QLSLPSHLSSAP) are compositionally biased toward low complexity. Phosphoserine is present on residues Ser175 and Ser177. Residues 197-212 (SRDHQRKDKEDSREMP) show a composition bias toward basic and acidic residues. Ser226 carries the post-translational modification Phosphoserine. Disordered stretches follow at residues 238-283 (VLCT…HGVQ) and 318-360 (AQTS…KNDA). Basic residues predominate over residues 245 to 267 (KKARRKKRLNWSNSKRGRQKKKP). Positions 251-266 (KRLNWSNSKRGRQKKK) match the Nuclear localization signal motif. Residues 343-353 (TSTAGKTTQVP) show a composition bias toward polar residues. The 82-residue stretch at 358-439 (NDAVDFLSPT…RQLEQKGLLF (82 aa)) folds into the SAND domain.

Its subcellular location is the nucleus. This chain is Interferon-induced protein 75 (Ifi75), found in Mus caroli (Ryukyu mouse).